The primary structure comprises 371 residues: 4-hydroxybutyrate dehydrogenase (371 aa).

Residues 88–92 (GSVID), 126–130 (TTCGT), and lysine 148 contribute to the NAD(+) site. Fe cation is bound by residues aspartate 182, histidine 186, histidine 253, and histidine 267. Histidine 267 is a binding site for NAD(+).

This sequence belongs to the iron-containing alcohol dehydrogenase family. Homodimer. Fe(2+) is required as a cofactor. Requires Cu(2+) as cofactor.

The catalysed reaction is 4-hydroxybutanoate + NAD(+) = succinate semialdehyde + NADH + H(+). Inactivated by oxygen. Its function is as follows. Involved in the anaerobic succinate degradation pathway. Catalyzes the interconversion of gamma-hydroxybutyrate (GHB) and succinic semialdehyde (SSA). This Clostridium kluyveri (strain ATCC 8527 / DSM 555 / NBRC 12016 / NCIMB 10680 / K1) protein is 4-hydroxybutyrate dehydrogenase.